The following is a 567-amino-acid chain: 2-succinyl-5-enolpyruvyl-6-hydroxy-3-cyclohexene-1-carboxylate synthase (567 aa).

The protein belongs to the TPP enzyme family. MenD subfamily. In terms of assembly, homodimer. The cofactor is Mg(2+). Mn(2+) is required as a cofactor. Thiamine diphosphate serves as cofactor.

The enzyme catalyses isochorismate + 2-oxoglutarate + H(+) = 5-enolpyruvoyl-6-hydroxy-2-succinyl-cyclohex-3-ene-1-carboxylate + CO2. It participates in quinol/quinone metabolism; 1,4-dihydroxy-2-naphthoate biosynthesis; 1,4-dihydroxy-2-naphthoate from chorismate: step 2/7. Its pathway is quinol/quinone metabolism; menaquinone biosynthesis. In terms of biological role, catalyzes the thiamine diphosphate-dependent decarboxylation of 2-oxoglutarate and the subsequent addition of the resulting succinic semialdehyde-thiamine pyrophosphate anion to isochorismate to yield 2-succinyl-5-enolpyruvyl-6-hydroxy-3-cyclohexene-1-carboxylate (SEPHCHC). The polypeptide is 2-succinyl-5-enolpyruvyl-6-hydroxy-3-cyclohexene-1-carboxylate synthase (Yersinia pseudotuberculosis serotype O:1b (strain IP 31758)).